Here is a 220-residue protein sequence, read N- to C-terminus: MVYKLVLLFCIASLGYSVEYKNTICPPRQDYRYWYFAAELTIGVNYDINSTIIGECYMSESYIDRNANIVLTGYGLEINMTIMDTDQRFVAAAEGVGKDNKLSVMLFTTQRLDKVHHNISVIITCMEMNCGTTKYNSDLPESIHHKSSCDITINGSCVTCVNLETDPTKINPHYLHPKDKYLYHNSKYGMRGSYGVTFIDELNQCLLDIKELSYDICYRE.

Positions 1–17 are cleaved as a signal peptide; it reads MVYKLVLLFCIASLGYS.

This sequence belongs to the orthopoxvirus OPG038 family. In terms of assembly, homooligomer. Interacts with host CD80 and CD86 when secreted. In terms of processing, glycosylated by host.

The protein resides in the host endoplasmic reticulum. It localises to the secreted. Plays a role in immune evasion. When secreted, inhibits T-cell activation by preventing the binding of host CD80 and CD86 to soluble CTLA4 and CD28. In the infected cell, may inhibits host NF kappa B activation. This chain is Early protein OPG038 (OPG038), found in Variola virus (isolate Human/India/Ind3/1967) (VARV).